A 440-amino-acid chain; its full sequence is Indoleamine 2,3-dioxygenase qulI (440 aa).

His347 is a binding site for heme.

Belongs to the indoleamine 2,3-dioxygenase family. Monomer. Heme is required as a cofactor.

The enzyme catalyses D-tryptophan + O2 = N-formyl-D-kynurenine. It carries out the reaction L-tryptophan + O2 = N-formyl-L-kynurenine. Its pathway is secondary metabolite biosynthesis. Its function is as follows. Indoleamine 2,3-dioxygenase; part of the gene cluster that mediates the biosynthesis of quinolactacin A2 (QUL A2), a fungal alkaloid that features a quinolone-gamma-lactam hybrid, which is a potential pharmacophore for the treatment of cancer and Alzheimer's disease. The quinolone-gamma-lactam hybrid scaffold is synthesized from the combination of L-isoleucine (L-Ile) and the nonproteinogenic amino acid L-kynurenine, followed by quinolone cyclization, oxidative decarboxylation, and lactam formation. Additionally, the N-methyl group is derived from methionine, which might be catalyzed by an S-adenosylmethionine (SAM)-dependent methyltransferase. Bioconversion of L-tryptophan to L-kynurenine could be catalyzed by the indoleamine-2,3-dioxygenase (IDO) qulI to produce an unstable product, N-formyl-L-kynurenine, followed by kynurenine formamidase catalyzed hydrolysis. QulM then acts as a methyltransferase that methylates L-kynurenine at the N-4 position. The FMN-dependent alpha-hydroxy acid dehydrogenase qulF than functions as an oxidative decarboxylase which converts N-methylkynurenine into 2-aminobenzoylacetamide via 2 tandem reactions, including dehydrogenation and decarboxylation. An amidase located outside of the qul gene cluster further produces the unstable beta-keto acid precursor N-methyl-2-aminobenzoylacetate, which could be spontaneously dehydrated to form N-methyl-4-hydroxy-2-quinolone. The NRPS qulB is able to incorporate N-methyl-2-aminobenzoylacetate and efficiently compete with the spontaneous reaction. By further extending the beta-keto acid with L-Ile, qulA performs a Dieckmann condensation to form the gamma-lactam ring and release a 4-ketopyrrolidinone intermediate from the assembly line. This intermediate could plausibly further undergo a spontaneous cyclization to yield the final quinolone-gamma-lactam hybrid structure. In Penicillium citrinum, this protein is Indoleamine 2,3-dioxygenase qulI.